A 155-amino-acid chain; its full sequence is MAEGEITTFAALTERFNLPLGNYKKPKLLYCSNGGHFLRILPDGTVDGTRDRSDQHIQLQLSAESAGEVYIKGTETGQYLAMDTEGLLYGSQTPNEECLFLERLEENHYNTYTSKKHAEKNWFVGLKKNGSCKRGPRTHYGQKAILFLPLPVSSD.

Residue Ala-2 is modified to N-acetylalanine. The propeptide occupies 2–15 (AEGEITTFAALTER). Asn-33 is a binding site for heparin. The tract at residues 127–143 (KKNGSCKRGPRTHYGQK) is heparin-binding.

It belongs to the heparin-binding growth factors family. Monomer. Homodimer. Interacts with FGFR1, FGFR2, FGFR3 and FGFR4. Affinity between fibroblast growth factors (FGFs) and their receptors is increased by heparan sulfate glycosaminoglycans that function as coreceptors. Found in a complex with FGFBP1, FGF1 and FGF2. Interacts with FGFBP1. Part of a Cu(2+)-dependent multiprotein aggregate containing FGF1, S100A13 and SYT1. Interacts with SYT1. Interacts with S100A13. Interacts with LRRC59. Interacts with CSNKA, CSNKB and FIBP. While binding with LRRC59, CSNKA and FIBP seem mutually exclusive, CSNKB and FIBP may cooperatively interact with FGF1. Forms a ternary complex with FGFR1 and ITGAV:ITGB3 and induces the recruitment of PTPN11 to the complex. In the nucleus, phosphorylated by PKC/PRKCD.

It is found in the secreted. The protein resides in the cytoplasm. Its subcellular location is the cell cortex. It localises to the cytosol. The protein localises to the nucleus. Its function is as follows. Plays an important role in the regulation of cell survival, cell division, angiogenesis, cell differentiation and cell migration. Functions as a potent mitogen in vitro. Acts as a ligand for FGFR1 and integrins. Binds to FGFR1 in the presence of heparin leading to FGFR1 dimerization and activation via sequential autophosphorylation on tyrosine residues which act as docking sites for interacting proteins, leading to the activation of several signaling cascades. Binds to integrin ITGAV:ITGB3. Its binding to integrin, subsequent ternary complex formation with integrin and FGFR1, and the recruitment of PTPN11 to the complex are essential for FGF1 signaling. Induces the phosphorylation and activation of FGFR1, FRS2, MAPK3/ERK1, MAPK1/ERK2 and AKT1. Can induce angiogenesis. This is Fibroblast growth factor 1 (Fgf1) from Mus musculus (Mouse).